A 102-amino-acid chain; its full sequence is Acid shock protein (102 aa).

An N-terminal signal peptide occupies residues 1–21 (MKKVLALVVAAAMGLSSAAFA). A compositionally biased stretch (low complexity) spans 22-41 (AETATTPAPTATTTKAAPAK). Residues 22–58 (AETATTPAPTATTTKAAPAKTTHHKKQHKAAPAQKAQ) constitute a propeptide that is removed on maturation. Residues 22–102 (AETATTPAPT…PAKPAAQPAA (81 aa)) are disordered. Residues 80-90 (AAKKHAKKHSH) are compositionally biased toward basic residues. Positions 91–102 (QQPAKPAAQPAA) are enriched in low complexity.

Belongs to the Asr family. In terms of processing, proteolytic processing gives rise to the active protein.

It localises to the periplasm. Functionally, required for growth and/or survival at acidic conditions. The chain is Acid shock protein (asr) from Escherichia coli O157:H7.